A 534-amino-acid polypeptide reads, in one-letter code: Cytochrome c oxidase subunit 1 (534 aa).

Residues 1-14 (MVQRWLYSTNAKDI) are Mitochondrial matrix-facing. The helical transmembrane segment at 15–39 (AVLYFMLAIFSGMAGTAMSLIIRLE) threads the bilayer. Positions 39, 42, and 44 each coordinate Ca(2+). The Mitochondrial intermembrane portion of the chain corresponds to 40–54 (LAAPGSQYLHGNSQL). A helical membrane pass occupies residues 55-88 (FNVLVVGHAVLMIFFLVMPALIGGFGNYLLPLMI). Histidine 62 contributes to the Fe(II)-heme a binding site. Residues 89–97 (GATDTAFPR) are Mitochondrial matrix-facing. The helical transmembrane segment at 98–118 (INNIAFWVLPMGLVCLVTSTL) threads the bilayer. At 119–142 (VESGAGTGWTVYPPLSSIQAHSGP) the chain is on the mitochondrial intermembrane side. A helical transmembrane segment spans residues 143–171 (SVDLAIFALHLTSISSLLGAINFIVTTLN). The Mitochondrial matrix portion of the chain corresponds to 172–183 (MRTNGMTMHKLP). A helical transmembrane segment spans residues 184–215 (LFVWSIFITAFLLLLSLPVLSAGITMLLLDRN). The Mitochondrial intermembrane segment spans residues 216-228 (FNTSFFEVSGGGD). Residues 229–263 (PILYEHLFWFFGHPEVYILIIPGFGIISHVVSTYS) traverse the membrane as a helical segment. Histidine 241 lines the Cu cation pocket. Residues 241 to 245 (HPEVY) constitute a cross-link (1'-histidyl-3'-tyrosine (His-Tyr)). Tyrosine 245 lines the O2 pocket. The Mitochondrial matrix portion of the chain corresponds to 264–269 (KKPVFG). A helical transmembrane segment spans residues 270–295 (EISMVYAMASIGLLGFLVWSHHMYIV). Cu cation-binding residues include histidine 290 and histidine 291. The Mitochondrial intermembrane portion of the chain corresponds to 296–298 (GLD). The helical transmembrane segment at 299–327 (ADTRAYFTSATMIIAIPTGIKIFSWLATI) threads the bilayer. At 328–335 (HGGSIRLA) the chain is on the mitochondrial matrix side. A helical transmembrane segment spans residues 336-358 (TPMLYAIAFLFLFTMGGLTGVAL). Residues 359 to 370 (ANASLDVAFHDT) lie on the Mitochondrial intermembrane side of the membrane. Residues histidine 368 and aspartate 369 each contribute to the Mg(2+) site. The chain crosses the membrane as a helical span at residues 371–400 (YYVVGHFHYVLSMGAIFSLFAGYYYWSPQI). Histidine 376 is a binding site for heme a3. Histidine 378 provides a ligand contact to Fe(II)-heme a. Residues 401 to 406 (LGLNYN) lie on the Mitochondrial matrix side of the membrane. A helical transmembrane segment spans residues 407–431 (EKLAQIQFWLIFIGANVIFFPMHFL). Topologically, residues 432–449 (GINGMPRRIPDYPDAFAG) are mitochondrial intermembrane. A Ca(2+)-binding site is contributed by proline 441. The chain crosses the membrane as a helical span at residues 450–474 (WNYVASIGSFIATLSLFLFIYILYD). The Mitochondrial matrix segment spans residues 475–534 (QLVNGLNNKVNNKSVIYNKAPDFVESNTIFNLNTVKSSSIEFLLTSPPAVHSFNTPAVQS).

The protein belongs to the heme-copper respiratory oxidase family. In terms of assembly, component of the cytochrome c oxidase (complex IV, CIV), a multisubunit enzyme composed of 12 subunits. The complex is composed of a catalytic core of 3 subunits COX1, COX2 and COX3, encoded in the mitochondrial DNA, and 9 supernumerary subunits COX4, COX5A (or COX5B), COX6, COX7, COX8, COX9, COX12, COX13 and COX26, which are encoded in the nuclear genome. The complex exists as a monomer or a dimer and forms supercomplexes (SCs) in the inner mitochondrial membrane with a dimer of ubiquinol-cytochrome c oxidoreductase (cytochrome b-c1 complex, complex III, CIII), resulting in 2 different assemblies (supercomplexes III(2)IV and III(2)IV(2)). It depends on heme as a cofactor. Requires Cu cation as cofactor. The N-terminus is blocked.

The protein localises to the mitochondrion inner membrane. The enzyme catalyses 4 Fe(II)-[cytochrome c] + O2 + 8 H(+)(in) = 4 Fe(III)-[cytochrome c] + 2 H2O + 4 H(+)(out). It functions in the pathway energy metabolism; oxidative phosphorylation. In terms of biological role, component of the cytochrome c oxidase, the last enzyme in the mitochondrial electron transport chain which drives oxidative phosphorylation. The respiratory chain contains 3 multisubunit complexes succinate dehydrogenase (complex II, CII), ubiquinol-cytochrome c oxidoreductase (cytochrome b-c1 complex, complex III, CIII) and cytochrome c oxidase (complex IV, CIV), that cooperate to transfer electrons derived from NADH and succinate to molecular oxygen, creating an electrochemical gradient over the inner membrane that drives transmembrane transport and the ATP synthase. Cytochrome c oxidase is the component of the respiratory chain that catalyzes the reduction of oxygen to water. Electrons originating from reduced cytochrome c in the intermembrane space (IMS) are transferred via the dinuclear copper A center (CU(A)) of COX2 and heme A of COX1 to the active site in COX1, a binuclear center (BNC) formed by heme A3 and copper B (CU(B)). The BNC reduces molecular oxygen to 2 water molecules using 4 electrons from cytochrome c in the IMS and 4 protons from the mitochondrial matrix. COX1 is a catalytic core subunit containing heme A and the active site BNC with heme A3 and the copper atom CU(B). This Saccharomyces cerevisiae (strain ATCC 204508 / S288c) (Baker's yeast) protein is Cytochrome c oxidase subunit 1 (COX1).